The chain runs to 103 residues: uncharacterized protein (103 aa).

The segment at 1 to 103 is disordered; the sequence is MAGARRRARC…WRGGSCTSQR (103 aa). The span at 35-44 shows a compositional bias: low complexity; it reads GSGQPRWWPW. Composition is skewed to basic residues over residues 55 to 65 and 74 to 84; these read RRPGPGRRARS and RPPHSRTRARR.

Belongs to the epstein-barr virus RPMS1 family.

This is an uncharacterized protein from Homo sapiens (Human).